Here is a 294-residue protein sequence, read N- to C-terminus: MTASIIDGKVIAADLRARVAFEVARVKRDHGLTPGLAVVLVGSDPASEVYVRSKHKQTQAAGMASFEHVLPADVAQPDLLALVARLNADPAVHGILVQLPLPKGLDTETIVAAIDPAKDVDGLHPHNAGRLAGGLPALSPCTPLGCIILTKSVHSSLEGMDAIVIGRSNLVGRPLVQLLLNENATVTIAHSRSRNLPELCRRADLVYAAVGKAEMVRGDWLKPGATVIDVGITRRPAADGKTRLIGDVAFDEAMEVAGAVTPVPGGVGQMTVACLLVNTLRAACAIKGLPAPGV.

Residues 166-168 (GRS), Ser-191, and Ile-232 contribute to the NADP(+) site.

Belongs to the tetrahydrofolate dehydrogenase/cyclohydrolase family. As to quaternary structure, homodimer.

It carries out the reaction (6R)-5,10-methylene-5,6,7,8-tetrahydrofolate + NADP(+) = (6R)-5,10-methenyltetrahydrofolate + NADPH. It catalyses the reaction (6R)-5,10-methenyltetrahydrofolate + H2O = (6R)-10-formyltetrahydrofolate + H(+). It functions in the pathway one-carbon metabolism; tetrahydrofolate interconversion. Functionally, catalyzes the oxidation of 5,10-methylenetetrahydrofolate to 5,10-methenyltetrahydrofolate and then the hydrolysis of 5,10-methenyltetrahydrofolate to 10-formyltetrahydrofolate. The sequence is that of Bifunctional protein FolD from Nitrobacter hamburgensis (strain DSM 10229 / NCIMB 13809 / X14).